The sequence spans 619 residues: Dihydroxy-acid dehydratase 1 (619 aa).

A Mg(2+)-binding site is contributed by aspartate 81. Position 122 (cysteine 122) interacts with [2Fe-2S] cluster. 2 residues coordinate Mg(2+): aspartate 123 and lysine 124. Lysine 124 bears the N6-carboxylysine mark. A [2Fe-2S] cluster-binding site is contributed by cysteine 198. Glutamate 494 is a Mg(2+) binding site. Serine 520 acts as the Proton acceptor in catalysis.

This sequence belongs to the IlvD/Edd family. In terms of assembly, homodimer. [2Fe-2S] cluster is required as a cofactor. Requires Mg(2+) as cofactor.

It carries out the reaction (2R)-2,3-dihydroxy-3-methylbutanoate = 3-methyl-2-oxobutanoate + H2O. The enzyme catalyses (2R,3R)-2,3-dihydroxy-3-methylpentanoate = (S)-3-methyl-2-oxopentanoate + H2O. It functions in the pathway amino-acid biosynthesis; L-isoleucine biosynthesis; L-isoleucine from 2-oxobutanoate: step 3/4. It participates in amino-acid biosynthesis; L-valine biosynthesis; L-valine from pyruvate: step 3/4. Functions in the biosynthesis of branched-chain amino acids. Catalyzes the dehydration of (2R,3R)-2,3-dihydroxy-3-methylpentanoate (2,3-dihydroxy-3-methylvalerate) into 2-oxo-3-methylpentanoate (2-oxo-3-methylvalerate) and of (2R)-2,3-dihydroxy-3-methylbutanoate (2,3-dihydroxyisovalerate) into 2-oxo-3-methylbutanoate (2-oxoisovalerate), the penultimate precursor to L-isoleucine and L-valine, respectively. The protein is Dihydroxy-acid dehydratase 1 of Bordetella bronchiseptica (strain ATCC BAA-588 / NCTC 13252 / RB50) (Alcaligenes bronchisepticus).